The following is a 570-amino-acid chain: Urease subunit alpha (570 aa).

The Urease domain occupies 132–570 (GGIDTHVHFI…LPMAQRYFLF (439 aa)). His-137 and His-139 together coordinate Ni(2+). The substrate site is built by His-139 and Ala-170. Position 220 (Lys-220) interacts with Ni(2+). At Lys-220 the chain carries N6-carboxylysine. Substrate contacts are provided by His-222 and His-249. His-249 and His-275 together coordinate Ni(2+). Catalysis depends on His-323, which acts as the Proton donor. A Ni(2+)-binding site is contributed by Asp-363. Ala-366 contributes to the substrate binding site.

It belongs to the metallo-dependent hydrolases superfamily. Urease alpha subunit family. In terms of assembly, heterotrimer of UreA (gamma), UreB (beta) and UreC (alpha) subunits. Three heterotrimers associate to form the active enzyme. It depends on Ni cation as a cofactor. Carboxylation allows a single lysine to coordinate two nickel ions.

It localises to the cytoplasm. The catalysed reaction is urea + 2 H2O + H(+) = hydrogencarbonate + 2 NH4(+). It participates in nitrogen metabolism; urea degradation; CO(2) and NH(3) from urea (urease route): step 1/1. Inhibited by fluoride. The sequence is that of Urease subunit alpha from Sporosarcina pasteurii (Bacillus pasteurii).